The sequence spans 151 residues: Ribonuclease H (151 aa).

Residues 1–141 enclose the RNase H type-1 domain; that stretch reads MKNVIIYTDG…ADALANRGID (141 aa). Residues D9, E47, D69, and D133 each contribute to the Mg(2+) site.

This sequence belongs to the RNase H family. In terms of assembly, monomer. The cofactor is Mg(2+).

It is found in the cytoplasm. The enzyme catalyses Endonucleolytic cleavage to 5'-phosphomonoester.. Endonuclease that specifically degrades the RNA of RNA-DNA hybrids. This is Ribonuclease H from Alcanivorax borkumensis (strain ATCC 700651 / DSM 11573 / NCIMB 13689 / SK2).